The primary structure comprises 151 residues: Large ribosomal subunit protein bL9 (151 aa).

It belongs to the bacterial ribosomal protein bL9 family.

Functionally, binds to the 23S rRNA. In Pelobacter propionicus (strain DSM 2379 / NBRC 103807 / OttBd1), this protein is Large ribosomal subunit protein bL9.